The sequence spans 329 residues: GTP 3',8-cyclase (329 aa).

The 227-residue stretch at 8 to 234 (AFARKFYYLR…QLRQRSDGPA (227 aa)) folds into the Radical SAM core domain. Arginine 17 contributes to the GTP binding site. 2 residues coordinate [4Fe-4S] cluster: cysteine 24 and cysteine 28. Tyrosine 30 provides a ligand contact to S-adenosyl-L-methionine. A [4Fe-4S] cluster-binding site is contributed by cysteine 31. Arginine 68 serves as a coordination point for GTP. Glycine 72 contacts S-adenosyl-L-methionine. Threonine 99 provides a ligand contact to GTP. Serine 123 provides a ligand contact to S-adenosyl-L-methionine. Lysine 160 provides a ligand contact to GTP. Methionine 194 serves as a coordination point for S-adenosyl-L-methionine. Residues cysteine 257 and cysteine 260 each contribute to the [4Fe-4S] cluster site. Residue 262-264 (RLR) participates in GTP binding. Cysteine 274 contributes to the [4Fe-4S] cluster binding site.

Belongs to the radical SAM superfamily. MoaA family. In terms of assembly, monomer and homodimer. Requires [4Fe-4S] cluster as cofactor.

It catalyses the reaction GTP + AH2 + S-adenosyl-L-methionine = (8S)-3',8-cyclo-7,8-dihydroguanosine 5'-triphosphate + 5'-deoxyadenosine + L-methionine + A + H(+). Its pathway is cofactor biosynthesis; molybdopterin biosynthesis. In terms of biological role, catalyzes the cyclization of GTP to (8S)-3',8-cyclo-7,8-dihydroguanosine 5'-triphosphate. This is GTP 3',8-cyclase from Salmonella heidelberg (strain SL476).